The following is a 785-amino-acid chain: Cadherin-7 (785 aa).

Residues 1–27 (MKLGKVELCRFLQLIALFLCFSGMNQA) form the signal peptide. A propeptide spanning residues 28–47 (ELPRSRSKPYFQLGRSRTKR) is cleaved from the precursor. Residues 28–607 (ELPRSRSKPY…AYILPAGLST (580 aa)) lie on the Extracellular side of the membrane. Cadherin domains follow at residues 49–153 (WVWN…EPKF), 154–262 (LDGP…PPRF), 263–377 (PRRS…PPVF), 378–482 (SSPL…APEF), and 482–599 (FAMD…AEAY). N-linked (GlcNAc...) asparagine glycans are attached at residues N449 and N530. Residues 608-628 (GALIAILACVLTLLVLILLIV) traverse the membrane as a helical segment. At 629–785 (TMKRRKKEPL…YGNGQESLYS (157 aa)) the chain is on the cytoplasmic side.

It localises to the cell membrane. Cadherins are calcium-dependent cell adhesion proteins. They preferentially interact with themselves in a homophilic manner in connecting cells; cadherins may thus contribute to the sorting of heterogeneous cell types. The polypeptide is Cadherin-7 (Cdh7) (Rattus norvegicus (Rat)).